A 442-amino-acid polypeptide reads, in one-letter code: Methylenetetrahydrofolate--tRNA-(uracil-5-)-methyltransferase TrmFO 1 (442 aa).

9 to 14 serves as a coordination point for FAD; the sequence is GAGLAG.

This sequence belongs to the MnmG family. TrmFO subfamily. It depends on FAD as a cofactor.

It is found in the cytoplasm. It carries out the reaction uridine(54) in tRNA + (6R)-5,10-methylene-5,6,7,8-tetrahydrofolate + NADH + H(+) = 5-methyluridine(54) in tRNA + (6S)-5,6,7,8-tetrahydrofolate + NAD(+). The catalysed reaction is uridine(54) in tRNA + (6R)-5,10-methylene-5,6,7,8-tetrahydrofolate + NADPH + H(+) = 5-methyluridine(54) in tRNA + (6S)-5,6,7,8-tetrahydrofolate + NADP(+). In terms of biological role, catalyzes the folate-dependent formation of 5-methyl-uridine at position 54 (M-5-U54) in all tRNAs. In Mesoplasma florum (strain ATCC 33453 / NBRC 100688 / NCTC 11704 / L1) (Acholeplasma florum), this protein is Methylenetetrahydrofolate--tRNA-(uracil-5-)-methyltransferase TrmFO 1.